The chain runs to 185 residues: Elongation factor P (185 aa).

Belongs to the elongation factor P family.

The protein resides in the cytoplasm. It participates in protein biosynthesis; polypeptide chain elongation. Functionally, involved in peptide bond synthesis. Stimulates efficient translation and peptide-bond synthesis on native or reconstituted 70S ribosomes in vitro. Probably functions indirectly by altering the affinity of the ribosome for aminoacyl-tRNA, thus increasing their reactivity as acceptors for peptidyl transferase. This chain is Elongation factor P, found in Syntrophomonas wolfei subsp. wolfei (strain DSM 2245B / Goettingen).